A 458-amino-acid polypeptide reads, in one-letter code: Putative U-box domain-containing protein 46 (458 aa).

In terms of domain architecture, U-box spans 71–144 (EVPKEFICTL…TQWCLVNKYD (74 aa)). ARM repeat units follow at residues 241 to 281 (ESNK…SLSA) and 283 to 322 (DSNK…NLCI).

It carries out the reaction S-ubiquitinyl-[E2 ubiquitin-conjugating enzyme]-L-cysteine + [acceptor protein]-L-lysine = [E2 ubiquitin-conjugating enzyme]-L-cysteine + N(6)-ubiquitinyl-[acceptor protein]-L-lysine.. It participates in protein modification; protein ubiquitination. Functions as an E3 ubiquitin ligase. This chain is Putative U-box domain-containing protein 46 (PUB46), found in Arabidopsis thaliana (Mouse-ear cress).